The sequence spans 433 residues: Sulfhydrylase FUB7 (433 aa).

Lysine 211 is subject to N6-(pyridoxal phosphate)lysine.

The protein belongs to the trans-sulfuration enzymes family. The cofactor is pyridoxal 5'-phosphate.

Its pathway is mycotoxin biosynthesis. Sulfhydrylase; part of the gene cluster that mediates the biosynthesis of fusaric acid, a mycotoxin with low to moderate toxicity to animals and humans, but with high phytotoxic properties. L-aspartate is suggested as fusaric acid amino acid precursor that is activated and further processed to O-acetyl-L-homoserine by cluster enzymes aspartate kinase FUB3 and homoserine O-acetyltransferase FUB5, as well as enzymes of the primary metabolism. The polyketide synthase (PKS) FUB1 generates the triketide trans-2-hexenal which is presumptively released by the hydrolase FUB4 and linked to the NRPS-bound amino acid precursor by NAD(P)-dependent dehydrogenase FUB6. FUB1, FUB4, and the non-canonical NRPS Fub8 may form an enzyme complex. Further processing of the NRPS-bound intermediate might be carried out by FUB6 and the O-acetylhomoserine FUB7, enabling a spontaneous electrocyclization to close the carbon backbone of fusaric acid. Dihydrofusaric acid is likely to be released via reduction by the thioester reductase (TR) domain of FUB8 whereupon the final oxidation to fusaric acid may (also) be performed by the FMN-dependent dehydrogenase FUB9. This is Sulfhydrylase FUB7 from Gibberella moniliformis (strain M3125 / FGSC 7600) (Maize ear and stalk rot fungus).